An 841-amino-acid polypeptide reads, in one-letter code: Probable alpha-glucuronidase A (841 aa).

An N-terminal signal peptide occupies residues 1–20 (MRGLNLFQLILALLLSMVAA). N-linked (GlcNAc...) asparagine glycosylation is found at N51, N76, N85, N149, N222, N279, N310, N343, N450, N465, N527, N576, N682, N723, and N732.

Belongs to the glycosyl hydrolase 67 family.

It is found in the secreted. The catalysed reaction is an alpha-D-glucuronoside + H2O = D-glucuronate + an alcohol. In terms of biological role, alpha-glucuronidase involved in the hydrolysis of xylan, a major structural heterogeneous polysaccharide found in plant biomass representing the second most abundant polysaccharide in the biosphere, after cellulose. Releases 4-O-methylglucuronic acid from xylan. This is Probable alpha-glucuronidase A (aguA) from Aspergillus niger.